A 363-amino-acid chain; its full sequence is Adenylate cyclase 2 (363 aa).

Residues V157–E286 form the Guanylate cyclase domain. The Mg(2+) site is built by D162 and D206. The disordered stretch occupies residues G341–L363.

Belongs to the adenylyl cyclase class-3 family. Mg(2+) serves as cofactor.

It carries out the reaction ATP = 3',5'-cyclic AMP + diphosphate. Functionally, plays essential roles in regulation of cellular metabolism by catalyzing the synthesis of a second messenger, cAMP. This chain is Adenylate cyclase 2 (cya2), found in Rhizobium meliloti (strain 1021) (Ensifer meliloti).